The following is a 386-amino-acid chain: Hydrazine synthase subunit beta (386 aa).

A signal peptide spans 1–34 (MVIRRKMNKMIRKGMIGAVMLGAAVAISGGVATA).

Part of the hydrazine synthase complex that forms an elongated dimer of heterotrimers composed of one alpha, one beta and one gamma subunit.

The protein localises to the anammoxosome. Its pathway is nitrogen metabolism. Component of the hydrazine synthase complex that catalyzes the condensation of nitric oxide (NO) with ammonium to form hydrazine. The beta subunit may play a role in modulating transport of the hydroxylamine intermediate through a tunnel between the gamma and alpha subunit's active site. Is involved in anaerobic ammonium oxidation (anammox), a biological process in which nitrite is used as the electron acceptor in the conversion of ammonium to dinitrogen gas (N2) and water; this bacterial process has a major role in the Earth's nitrogen cycle and has been estimated to synthesize up to 50% of the dinitrogen gas emitted into our atmosphere from the oceans. This is Hydrazine synthase subunit beta from Kuenenia stuttgartiensis.